The sequence spans 574 residues: UvrABC system protein C (574 aa).

One can recognise a GIY-YIG domain in the interval 12-92 (KKPGVYIFKN…IYIHKPKYNI (81 aa)). Residues 200-235 (EEVKNYLQKAMMDYAKIKNYEKAAQMRDTLFKLENL) enclose the UVR domain.

It belongs to the UvrC family. Interacts with UvrB in an incision complex.

It is found in the cytoplasm. Functionally, the UvrABC repair system catalyzes the recognition and processing of DNA lesions. UvrC both incises the 5' and 3' sides of the lesion. The N-terminal half is responsible for the 3' incision and the C-terminal half is responsible for the 5' incision. The polypeptide is UvrABC system protein C (Petrotoga mobilis (strain DSM 10674 / SJ95)).